Consider the following 283-residue polypeptide: Coiled-coil domain-containing protein 107 (283 aa).

The first 24 residues, 1–24, serve as a signal peptide directing secretion; that stretch reads MAGAVSLLGVVGLLLVSALSGVLG. Residues 30-62 are disordered; the sequence is DLRAHPGNAAHPGSGATEPRRRPPLKDQRERTR. The span at 47–62 shows a compositional bias: basic and acidic residues; the sequence is EPRRRPPLKDQRERTR. A helical transmembrane segment spans residues 65–85; that stretch reads SLPLGALYTAAVAAFVLYKCL. Positions 104 to 134 form a coiled coil; it reads LQSEQQLAQLTQQLAQTEQHLNNLMAQLDPL. 2 disordered regions span residues 164–207 and 258–283; these read KPDK…SRPL and AKGPSHSLGWEGGTTAEGRLKQSLFS. Over residues 176–187 the composition is skewed to gly residues; sequence EGSGGESAGGGD.

It localises to the membrane. This chain is Coiled-coil domain-containing protein 107 (CCDC107), found in Homo sapiens (Human).